A 66-amino-acid chain; its full sequence is Large ribosomal subunit protein uL29 (66 aa).

The protein belongs to the universal ribosomal protein uL29 family.

The protein is Large ribosomal subunit protein uL29 of Allorhizobium ampelinum (strain ATCC BAA-846 / DSM 112012 / S4) (Agrobacterium vitis (strain S4)).